We begin with the raw amino-acid sequence, 292 residues long: UPF0725 protein At4g28920 (292 aa).

The segment covering 1–17 (MSENDSSESDIEMDPEE) has biased composition (acidic residues). The interval 1 to 24 (MSENDSSESDIEMDPEEEKVYRRQ) is disordered.

This sequence belongs to the UPF0725 (EMB2204) family.

This is UPF0725 protein At4g28920 from Arabidopsis thaliana (Mouse-ear cress).